The following is a 255-amino-acid chain: Taurine import ATP-binding protein TauB (255 aa).

The 228-residue stretch at 2-229 (LQISHLYADY…RFVAGESSRS (228 aa)) folds into the ABC transporter domain. 34-41 (GPSGCGKT) is an ATP binding site.

It belongs to the ABC transporter superfamily. Taurine importer (TC 3.A.1.17.1) family. In terms of assembly, the complex is composed of two ATP-binding proteins (TauB), two transmembrane proteins (TauC) and a solute-binding protein (TauA).

It localises to the cell inner membrane. The catalysed reaction is taurine(out) + ATP + H2O = taurine(in) + ADP + phosphate + H(+). Part of the ABC transporter complex TauABC involved in taurine import. Responsible for energy coupling to the transport system. This Escherichia coli O6:K15:H31 (strain 536 / UPEC) protein is Taurine import ATP-binding protein TauB.